Reading from the N-terminus, the 623-residue chain is Isocitrate dehydrogenase kinase/phosphatase (623 aa).

ATP is bound by residues 344–350 (APGIKGM) and Lys-365. Residue Asp-400 is part of the active site.

It belongs to the AceK family.

It is found in the cytoplasm. The enzyme catalyses L-seryl-[isocitrate dehydrogenase] + ATP = O-phospho-L-seryl-[isocitrate dehydrogenase] + ADP + H(+). Bifunctional enzyme which can phosphorylate or dephosphorylate isocitrate dehydrogenase (IDH) on a specific serine residue. This is a regulatory mechanism which enables bacteria to bypass the Krebs cycle via the glyoxylate shunt in response to the source of carbon. When bacteria are grown on glucose, IDH is fully active and unphosphorylated, but when grown on acetate or ethanol, the activity of IDH declines drastically concomitant with its phosphorylation. The protein is Isocitrate dehydrogenase kinase/phosphatase of Polaromonas naphthalenivorans (strain CJ2).